The sequence spans 185 residues: MNLQHHFLIAMPLLQNTYFERSVIYVCEHNENGAMGLMINQPVARFTLERLLKKLNISSVHDAGHLNKPVMSGGPLSDDRGFILHSPQSGFNSSIHVSDDTMITTSKDILKTLGTKKQPKNIMVAVGYTGWQKGQLEQELIDNVWLTTKADTEILFNTLIPNRWYEAASKLGINIFHIAQQAGHA.

Belongs to the UPF0301 (AlgH) family.

This Hamiltonella defensa subsp. Acyrthosiphon pisum (strain 5AT) protein is UPF0301 protein HDEF_0602.